Here is a 346-residue protein sequence, read N- to C-terminus: Probable dual-specificity RNA methyltransferase RlmN (346 aa).

The Proton acceptor role is filled by glutamate 76. The Radical SAM core domain maps to 97–329; that stretch reads SYDRATICVS…TFIRKPRGRD (233 aa). A disulfide bridge connects residues cysteine 104 and cysteine 334. [4Fe-4S] cluster contacts are provided by cysteine 111, cysteine 115, and cysteine 118. Residues 162-163, serine 192, 215-217, and asparagine 291 contribute to the S-adenosyl-L-methionine site; these read GE and SLN. The S-methylcysteine intermediate role is filled by cysteine 334.

It belongs to the radical SAM superfamily. RlmN family. [4Fe-4S] cluster is required as a cofactor.

The protein localises to the cytoplasm. It carries out the reaction adenosine(2503) in 23S rRNA + 2 reduced [2Fe-2S]-[ferredoxin] + 2 S-adenosyl-L-methionine = 2-methyladenosine(2503) in 23S rRNA + 5'-deoxyadenosine + L-methionine + 2 oxidized [2Fe-2S]-[ferredoxin] + S-adenosyl-L-homocysteine. The catalysed reaction is adenosine(37) in tRNA + 2 reduced [2Fe-2S]-[ferredoxin] + 2 S-adenosyl-L-methionine = 2-methyladenosine(37) in tRNA + 5'-deoxyadenosine + L-methionine + 2 oxidized [2Fe-2S]-[ferredoxin] + S-adenosyl-L-homocysteine. Specifically methylates position 2 of adenine 2503 in 23S rRNA and position 2 of adenine 37 in tRNAs. The protein is Probable dual-specificity RNA methyltransferase RlmN of Koribacter versatilis (strain Ellin345).